We begin with the raw amino-acid sequence, 373 residues long: Chaperone protein DnaJ (373 aa).

One can recognise a J domain in the interval 4–68 (DFYEILGVSR…QARANYDRFG (65 aa)). A CR-type zinc finger spans residues 132-214 (GGEKEIRINH…CGGQGHIQVS (83 aa)). Residues Cys145, Cys148, Cys162, Cys165, Cys188, Cys191, Cys202, and Cys205 each contribute to the Zn(2+) site. 4 CXXCXGXG motif repeats span residues 145–152 (CKTCQGTG), 162–169 (CSTCGGVG), 188–195 (CPTCGGSG), and 202–209 (CESCGGQG).

Belongs to the DnaJ family. Homodimer. Zn(2+) serves as cofactor.

It localises to the cytoplasm. Functionally, participates actively in the response to hyperosmotic and heat shock by preventing the aggregation of stress-denatured proteins and by disaggregating proteins, also in an autonomous, DnaK-independent fashion. Unfolded proteins bind initially to DnaJ; upon interaction with the DnaJ-bound protein, DnaK hydrolyzes its bound ATP, resulting in the formation of a stable complex. GrpE releases ADP from DnaK; ATP binding to DnaK triggers the release of the substrate protein, thus completing the reaction cycle. Several rounds of ATP-dependent interactions between DnaJ, DnaK and GrpE are required for fully efficient folding. Also involved, together with DnaK and GrpE, in the DNA replication of plasmids through activation of initiation proteins. The chain is Chaperone protein DnaJ from Thermosynechococcus vestitus (strain NIES-2133 / IAM M-273 / BP-1).